Consider the following 97-residue polypeptide: Glutamyl-tRNA(Gln) amidotransferase subunit C 2 (97 aa).

This sequence belongs to the GatC family. Heterotrimer of A, B and C subunits.

The enzyme catalyses L-glutamyl-tRNA(Gln) + L-glutamine + ATP + H2O = L-glutaminyl-tRNA(Gln) + L-glutamate + ADP + phosphate + H(+). The catalysed reaction is L-aspartyl-tRNA(Asn) + L-glutamine + ATP + H2O = L-asparaginyl-tRNA(Asn) + L-glutamate + ADP + phosphate + 2 H(+). Allows the formation of correctly charged Asn-tRNA(Asn) or Gln-tRNA(Gln) through the transamidation of misacylated Asp-tRNA(Asn) or Glu-tRNA(Gln) in organisms which lack either or both of asparaginyl-tRNA or glutaminyl-tRNA synthetases. The reaction takes place in the presence of glutamine and ATP through an activated phospho-Asp-tRNA(Asn) or phospho-Glu-tRNA(Gln). The protein is Glutamyl-tRNA(Gln) amidotransferase subunit C 2 (gatC2) of Clostridium acetobutylicum (strain ATCC 824 / DSM 792 / JCM 1419 / IAM 19013 / LMG 5710 / NBRC 13948 / NRRL B-527 / VKM B-1787 / 2291 / W).